The chain runs to 378 residues: Copper-containing nitrite reductase (378 aa).

Residues 1–38 (MTEQLQMTRRTMLAGAALAGAVAPLLHTAQAHAAGAAA) constitute a signal peptide (tat-type signal). Plastocyanin-like domains follow at residues 39 to 213 (AAGA…YDKI) and 214 to 378 (YYVG…PASM). Residues histidine 133, histidine 138, histidine 173, cysteine 174, histidine 183, methionine 188, and histidine 344 each coordinate Cu cation.

Belongs to the multicopper oxidase family. Homotrimer. Cu(+) is required as a cofactor. The cofactor is Cu(2+). Requires FAD as cofactor. In terms of processing, predicted to be exported by the Tat system. The position of the signal peptide cleavage has been experimentally proven.

It is found in the periplasm. It catalyses the reaction nitric oxide + Fe(III)-[cytochrome c] + H2O = Fe(II)-[cytochrome c] + nitrite + 2 H(+). The protein operates within nitrogen metabolism; nitrate reduction (denitrification); dinitrogen from nitrate: step 2/4. The protein is Copper-containing nitrite reductase (nirK) of Achromobacter cycloclastes.